The chain runs to 293 residues: MMRIALFLLTNLAVMVVFGLVLSLTGIQSSSVQGLMIMALLFGFGGSFVSLLMSKWMALRSVGGEVIEQPRNERERWLVNTVATQARQAGIAMPQVAIYHAPDINAFATGARRDASLVAVSTGLLQNMSPDEAEAVIAHEISHIANGDMVTMTLIQGVVNTFVIFISRILAQLAAGFMGGNRDEGEESNGNPLIYFAVATVLELVFGILASIITMWFSRHREFHADAGSAKLVGREKMIAALQRLKTSYEPQEATSMMALCINGKSKSLSELFMTHPPLDKRIEALRTGEYLK.

The Cytoplasmic portion of the chain corresponds to 1 to 3 (MMR). Residues 4–24 (IALFLLTNLAVMVVFGLVLSL) form a helical membrane-spanning segment. The Periplasmic portion of the chain corresponds to 25-33 (TGIQSSSVQ). A helical transmembrane segment spans residues 34–54 (GLMIMALLFGFGGSFVSLLMS). At 55-293 (KWMALRSVGG…EALRTGEYLK (239 aa)) the chain is on the cytoplasmic side. H139 is a binding site for Zn(2+). The active site involves E140. Positions 143 and 222 each coordinate Zn(2+).

Belongs to the peptidase M48B family. It depends on Zn(2+) as a cofactor. Undergoes self-cleavage. This may not be physiological.

The protein resides in the cell inner membrane. In terms of biological role, membrane-localized protease able to endoproteolytically degrade overproduced SecY but not YccA, another membrane protein. It seems to cleave SecY at specific cytoplasmic sites. Does not require ATP. Its natural substrate has not been identified. Probably plays a role in the quality control of integral membrane proteins. This Escherichia coli (strain K12) protein is Protease HtpX (htpX).